The following is a 232-amino-acid chain: LexA repressor (232 aa).

The H-T-H motif DNA-binding region spans 26-46; the sequence is FDEMKDALDLRSKSGIHRLIT. Residues Ser153 and Lys191 each act as for autocatalytic cleavage activity in the active site.

It belongs to the peptidase S24 family. As to quaternary structure, homodimer.

The enzyme catalyses Hydrolysis of Ala-|-Gly bond in repressor LexA.. Its function is as follows. Represses a number of genes involved in the response to DNA damage (SOS response), including recA and lexA. In the presence of single-stranded DNA, RecA interacts with LexA causing an autocatalytic cleavage which disrupts the DNA-binding part of LexA, leading to derepression of the SOS regulon and eventually DNA repair. This chain is LexA repressor, found in Afipia carboxidovorans (strain ATCC 49405 / DSM 1227 / KCTC 32145 / OM5) (Oligotropha carboxidovorans).